The sequence spans 335 residues: MTEVYDFDQSSWYTKGSLAPILPTTYPDGRLIPQVRVIDPGLGDRKDECFMYIFLMGIIEDNDGLGPPIGRTFGSLPLGVGRTTARPEELLKEATLLDIMVRRTAGVKEQLVFYNNTPLHILTPWKKVLTSGSVFSANQVCNTVNLIPLDIAQRFRVVYMSITRLSDDGSYRIPRGVFEFRSRNALAFNILVTIRVEGDVDSSRGNLGMFKDYQATFMVHIGNFSRKKNQAYSADYCKLKIEKMGLVFALGGIGGTSLHIRCTGKMSKALNAQLGFKKILCYPLMEINEDLNRFLWRSECKIVRIQAVLQPSVPQDFRVYNDVIISDDQGLFKIL.

The protein belongs to the morbillivirus/respirovirus/rubulavirus M protein family.

It is found in the virion. The M protein has a crucial role in virus assembly and interacts with the RNP complex as well as with the viral membrane. The protein is Matrix protein (M) of Ailuropoda melanoleuca (Giant panda).